Here is a 907-residue protein sequence, read N- to C-terminus: Protein translocase subunit SecA (907 aa).

ATP-binding positions include Gln-87, 105-109 (GEGKT), and Asp-506. Residues 834-850 (LEQQREEEAREQAEKMK) show a composition bias toward basic and acidic residues. Residues 834-907 (LEQQREEEAR…KYKQCHGKIE (74 aa)) are disordered. Over residues 864-875 (QPQPSQQQGEQP) the composition is skewed to low complexity. Zn(2+)-binding residues include Cys-891, Cys-893, Cys-902, and His-903. Residues 897-907 (KKYKQCHGKIE) are compositionally biased toward basic residues.

The protein belongs to the SecA family. In terms of assembly, monomer and homodimer. Part of the essential Sec protein translocation apparatus which comprises SecA, SecYEG and auxiliary proteins SecDF-YajC and YidC. Requires Zn(2+) as cofactor.

Its subcellular location is the cell inner membrane. The protein resides in the cytoplasm. The catalysed reaction is ATP + H2O + cellular proteinSide 1 = ADP + phosphate + cellular proteinSide 2.. Part of the Sec protein translocase complex. Interacts with the SecYEG preprotein conducting channel. Has a central role in coupling the hydrolysis of ATP to the transfer of proteins into and across the cell membrane, serving both as a receptor for the preprotein-SecB complex and as an ATP-driven molecular motor driving the stepwise translocation of polypeptide chains across the membrane. The protein is Protein translocase subunit SecA of Alcanivorax borkumensis (strain ATCC 700651 / DSM 11573 / NCIMB 13689 / SK2).